The chain runs to 340 residues: Ferrochelatase (340 aa).

Residues H189 and E292 each coordinate Fe cation.

The protein belongs to the ferrochelatase family.

The protein resides in the cytoplasm. It catalyses the reaction heme b + 2 H(+) = protoporphyrin IX + Fe(2+). The protein operates within porphyrin-containing compound metabolism; protoheme biosynthesis; protoheme from protoporphyrin-IX: step 1/1. Functionally, catalyzes the ferrous insertion into protoporphyrin IX. This is Ferrochelatase from Pseudomonas aeruginosa (strain LESB58).